A 251-amino-acid chain; its full sequence is Ell1-associated factor 1 (251 aa).

Disordered regions lie at residues 110-187 and 201-251; these read SKTV…DMEV and FDQE…EDED. The span at 112–123 shows a compositional bias: polar residues; sequence TVPSNAITQSDN. Over residues 124-135 the composition is skewed to low complexity; it reads SQISESKSTSQS. Basic and acidic residues predominate over residues 143–157; it reads RRKEKELEASKDGKI. Composition is skewed to polar residues over residues 204 to 220 and 236 to 251; these read EFNS…TASK and SSAQ…EDED. Residue S247 is modified to Phosphoserine.

It belongs to the EAF family. In terms of assembly, forms a stable heterodimer with ell1. Ell1-eaf1 complex interacts with RNA polymerase II.

Its subcellular location is the nucleus. Functionally, activates transcription elongation by RNA polymerase II and pyrophosphorolysis as a complex with ell1. Acts as a transcriptional transactivator of ell1 elongation activities. The polypeptide is Ell1-associated factor 1 (eaf1) (Schizosaccharomyces pombe (strain 972 / ATCC 24843) (Fission yeast)).